The following is a 177-amino-acid chain: MFPILETDRLILRQITDQDAEAIFACFSNDEVTRYYGLENMESIEQAISMIQTFAALYQEKRGIRWGIERRDTKELIGTIGFHALAQKHRRAEIGYEIIPEHWRNGFASEVISKVVSYGFSALGLSRIGAVVFTDNEASNRLLLKMGFQKEGVLRQYMYQNGTPYDTNVYSIVKPRE.

The 168-residue stretch at 10–177 (LILRQITDQD…NVYSIVKPRE (168 aa)) folds into the N-acetyltransferase domain.

This sequence belongs to the acetyltransferase family.

This is an uncharacterized protein from Bacillus subtilis (strain 168).